The following is a 242-amino-acid chain: 2-C-methyl-D-erythritol 4-phosphate cytidylyltransferase (242 aa).

Belongs to the IspD/TarI cytidylyltransferase family. IspD subfamily.

It catalyses the reaction 2-C-methyl-D-erythritol 4-phosphate + CTP + H(+) = 4-CDP-2-C-methyl-D-erythritol + diphosphate. It functions in the pathway isoprenoid biosynthesis; isopentenyl diphosphate biosynthesis via DXP pathway; isopentenyl diphosphate from 1-deoxy-D-xylulose 5-phosphate: step 2/6. Catalyzes the formation of 4-diphosphocytidyl-2-C-methyl-D-erythritol from CTP and 2-C-methyl-D-erythritol 4-phosphate (MEP). In Vesicomyosocius okutanii subsp. Calyptogena okutanii (strain HA), this protein is 2-C-methyl-D-erythritol 4-phosphate cytidylyltransferase.